The following is a 299-amino-acid chain: Caspase-1 (299 aa).

The propeptide occupies 1–28; it reads MLDGKQDNGNVDSVDIKQRTNGGGDEGD. The disordered stretch occupies residues 1–45; it reads MLDGKQDNGNVDSVDIKQRTNGGGDEGDALGSNSSSQPNRVARMP. Residues histidine 136 and cysteine 178 contribute to the active site. The propeptide occupies 185-195; that stretch reads GGITLSRTETD.

It belongs to the peptidase C14A family. Heterotetramer that consists of two anti-parallel arranged heterodimers, each one formed by a 19/18 kDa (p19/18) and a 12 kDa (p12) subunit. The two subunits are derived from the precursor sequence by an autocatalytic mechanism.

Involved in the activation cascade of caspases responsible for apoptosis execution. Inhibited by the baculovirus anti-apoptotic protein p35. Cleaves p35 and nuclear immunophilin FKBP46. This is Caspase-1 from Spodoptera frugiperda (Fall armyworm).